Reading from the N-terminus, the 471-residue chain is MTTEATALAYKVADITLAEWGRKEIEIAEKEMPGLMATRRKYAGQKPLKGARITGSLHMTIQTAVLIETLVDLGAEVRWASCNIFSTQDHAAAAIAAAGIPVFAWKGESLDEYWWCTRQILEFEDGKGPNLIVDDGGDATLMIHLGYKIENNPELLEKVPGNAEEKALYQQLREVYSEDTQRWHKVAAEMKGVSEETTTGVHRLYQMMEKGELLFPAINVNDSVTKSKFDNLYGCRESLADGIKRATDVMIAGKVVVVLGYGDVGKGCAHSMRTYGARVIVTEIDPICALQASMEGFEVTTMEDAVGEGNIFVTTTGNKDVITLEHMKQMRDEAIVCNIGHFDNEIQVEQLNSFAGATKLNIKPQVDKYTFESGNSIYLLAEGRLVNLGCATGHPSFVMSNSFTNQTLAQIELWTKEYSIDVYRLPKELDEEVARLHLGQLGVKLTTLSKEQADYLGIPVEGPYKPDHYRY.

Substrate is bound by residues T60, D135, and E196. Position 197 to 199 (197 to 199 (TTT)) interacts with NAD(+). 2 residues coordinate substrate: K226 and D230. NAD(+) is bound by residues N231, 260 to 265 (GYGDVG), E283, N318, 339 to 341 (IGH), and N387.

It belongs to the adenosylhomocysteinase family. NAD(+) is required as a cofactor.

The protein resides in the cytoplasm. The catalysed reaction is S-adenosyl-L-homocysteine + H2O = L-homocysteine + adenosine. Its pathway is amino-acid biosynthesis; L-homocysteine biosynthesis; L-homocysteine from S-adenosyl-L-homocysteine: step 1/1. Functionally, may play a key role in the regulation of the intracellular concentration of adenosylhomocysteine. The chain is Adenosylhomocysteinase from Chlorobium limicola (strain DSM 245 / NBRC 103803 / 6330).